The sequence spans 1148 residues: Trafficking protein particle complex subunit 9 (1148 aa).

Phosphoserine occurs at positions 566 and 953.

It belongs to the NIBP family. In terms of assembly, component of the multisubunit TRAPP (transport protein particle) complex, which includes at least TRAPPC2, TRAPPC2L, TRAPPC3, TRAPPC3L, TRAPPC4, TRAPPC5, TRAPPC8, TRAPPC9, TRAPPC10, TRAPPC11 and TRAPPC12. Directly interacts with IKBKB and MAP3K14. In terms of tissue distribution, expressed in neurons of the pyramidal layer of the cortex, in spinal cord motor neurons and white matter neurons (at protein level).

The protein localises to the golgi apparatus. The protein resides in the cis-Golgi network. It is found in the endoplasmic reticulum. Its subcellular location is the cytoplasm. Functions as an activator of NF-kappa-B through increased phosphorylation of the IKK complex. May function in neuronal cells differentiation. May play a role in vesicular transport from endoplasmic reticulum to Golgi. The sequence is that of Trafficking protein particle complex subunit 9 (Trappc9) from Mus musculus (Mouse).